The following is a 142-amino-acid chain: MAP3K7 C-terminal-like protein (142 aa).

In terms of tissue distribution, detected in lung and peripheral blood leukocytes. Expressed predominantly in peripheral blood leukocytes and ubiquitously in adult and fetal tissues. Also expressed strongly in breast carcinoma GI-101, colon adenocarcinoma GI-112, and prostatic adenocarcinoma PC3.

The protein is MAP3K7 C-terminal-like protein (MAP3K7CL) of Homo sapiens (Human).